The chain runs to 509 residues: Probable cytosol aminopeptidase (509 aa).

Mn(2+) is bound by residues Lys-277 and Asp-282. The active site involves Lys-289. 3 residues coordinate Mn(2+): Asp-300, Asp-359, and Glu-361. Residue Arg-363 is part of the active site.

Belongs to the peptidase M17 family. Mn(2+) serves as cofactor.

The protein localises to the cytoplasm. The catalysed reaction is Release of an N-terminal amino acid, Xaa-|-Yaa-, in which Xaa is preferably Leu, but may be other amino acids including Pro although not Arg or Lys, and Yaa may be Pro. Amino acid amides and methyl esters are also readily hydrolyzed, but rates on arylamides are exceedingly low.. The enzyme catalyses Release of an N-terminal amino acid, preferentially leucine, but not glutamic or aspartic acids.. In terms of biological role, presumably involved in the processing and regular turnover of intracellular proteins. Catalyzes the removal of unsubstituted N-terminal amino acids from various peptides. This is Probable cytosol aminopeptidase from Chloroherpeton thalassium (strain ATCC 35110 / GB-78).